The primary structure comprises 179 residues: Nuclear transcription factor Y subunit B (179 aa).

A disordered region spans residues 1 to 32; the sequence is MAEAPASPGGGGGSHESGSPRGGGGGGSVREQ. A compositionally biased stretch (gly residues) spans 8–28; sequence PGGGGGSHESGSPRGGGGGGS. The DNA-binding element occupies 36–42; that stretch reads LPIANIS. A subunit association domain (SAD) region spans residues 63–74; the sequence is VQECVSEFISFI. A disordered region spans residues 147–179; it reads SSSAAEGMGQQGAYNQGMGYMQPQYHNGDISNV.

The protein belongs to the NFYB/HAP3 subunit family. Heterotrimeric transcription factor composed of three components, NF-YA, NF-YB and NF-YC. NF-YB and NF-YC must interact and dimerize for NF-YA association and DNA binding.

The protein localises to the nucleus. In terms of biological role, component of the NF-Y/HAP transcription factor complex. The NF-Y complex stimulates the transcription of various genes by recognizing and binding to a CCAAT motif in promoters. The sequence is that of Nuclear transcription factor Y subunit B (NFY2) from Zea mays (Maize).